Consider the following 100-residue polypeptide: Defensin-6 (100 aa).

A signal peptide spans 1 to 19 (MRTLTILTAVLLVALQAKA). A propeptide spanning residues 20-68 (EPLQAEDDPLQAKAYEADAQEQRGANDQDFAVSFAEDASSSLRALGSTR) is cleaved from the precursor. Cystine bridges form between Cys-72–Cys-99, Cys-74–Cys-88, and Cys-78–Cys-98.

It belongs to the alpha-defensin family. In terms of assembly, homodimer. Self-assembles into higher-order oligomers termed nanonets, fibril-like structures that entrap microbes. Self-assembly into nanonets seems to protect against proteolytic digestion in duodenal fluid. Interacts with Y.enterocolitica invasin and S.typhimurium fliC/flagellin; the interaction creates an anchoring site for progressive DEFA6 self-assembly into nanonets. In terms of processing, proteolytically cleaved by trypsin at Arg-68; the propeptide is stored in the tissue of the small intestine and the mature peptide is found in the luminal fluid; cleavage may occur during or after release into the lumen. The N-terminal propeptide region suppresses self-assembly and renders DEFA6 propeptide unable to agglutinate bacteria and protect human epithelial cells from bacterial invasion. Post-translationally, under reducing conditions, naturally present in the gut owing to the low redox potential or enzymatically generated by the thioredoxin system, the disulfide bridges are opened leading to a conformational change of DEF6, thereby changing its antimicrobial spectrum. The reduced form exhibits inhibitory activity against anaerobic bacteria, in contrast to the minimal antimicrobial activity of the disulfide-linked oxidized form. The formation of higher-order nanonets and bacterial entrapment is independent of the redox state. In terms of tissue distribution, expressed in Paneth cells of the small intestine (at protein level).

The protein localises to the secreted. It localises to the cytoplasmic vesicle. The protein resides in the secretory vesicle. Functionally, host-defense peptide that contributes to intestinal innate immunity and mediates homeostasis at mucosal surfaces by forming higher-order oligomers that capture bacteria and prevent microbial invasion of the epithelium. After binding to bacterial surface proteins, undergoes ordered self-assembly to form fibril-like nanonets that surround and entangle bacteria and thereby prevent bacterial invasion across the epithelial barrier. Entangles and agglutinates Gram-negative bacteria, such as E.coli, S.typhimurium and Y.enterocolitica, and Gram-positive bacteria such as L.monocytogenes, thereby protecting the intestine against invasion by enteric bacterial pathogens. Blocks adhesion of C.albicans to intestinal epithelial cells and thereby suppresses fungal invasion of epithelial cells and biofilm formation. Under reducing conditions and in an acidic environment similar to the intestinal milieu, exhibits inhibitory activity against anaerobic bacteria such as B.adolescentis, L.acidophilus and B.breve, as well as B.longum and S.thermophilus, possibly by leading to alterations in bacterial cell envelope structures. The disulfide-linked oxidized form exhibits negligible antimicrobial activity against Gram-negative and Gram-positive bacteria, as compared to the enteric defensin DEFA5. The protein is Defensin-6 (DEFA6) of Homo sapiens (Human).